Reading from the N-terminus, the 71-residue chain is Phosphatidylinositol N-acetylglucosaminyltransferase subunit Y (71 aa).

Over 1–3 the chain is Cytoplasmic; that stretch reads MFL. A helical transmembrane segment spans residues 4–26; the sequence is SLPMLTVLIPLVSLAGLFYSASV. Topologically, residues 27–44 are lumenal; sequence EDDFPQGCTSTTSLCFYS. The chain crosses the membrane as a helical span at residues 45 to 65; it reads LLLPITIPVYVFFHLWTWMGI. The Cytoplasmic portion of the chain corresponds to 66 to 71; sequence KLFRHN.

As to quaternary structure, component of the glycosylphosphatidylinositol-N-acetylglucosaminyltransferase (GPI-GnT) complex composed at least by PIGA, PIGC, PIGH, PIGP, PIGQ, PIGY and DPM2. Interacts directly with PIGA; this interaction regulates glycosylphosphatidylinositol-N-acetylglucosaminyltransferase activity. Does not interact with Ras proteins.

The protein localises to the endoplasmic reticulum membrane. It functions in the pathway glycolipid biosynthesis; glycosylphosphatidylinositol-anchor biosynthesis. In terms of biological role, part of the glycosylphosphatidylinositol-N-acetylglucosaminyltransferase (GPI-GnT) complex that catalyzes the transfer of N-acetylglucosamine from UDP-N-acetylglucosamine to phosphatidylinositol and participates in the first step of GPI biosynthesis. May act by regulating the catalytic subunit PIGA. The polypeptide is Phosphatidylinositol N-acetylglucosaminyltransferase subunit Y (Bos taurus (Bovine)).